The sequence spans 303 residues: Glucose-1-phosphate thymidylyltransferase (303 aa).

Residues aspartate 108 and aspartate 222 each contribute to the Mg(2+) site.

The protein belongs to the glucose-1-phosphate thymidylyltransferase family. Requires Mg(2+) as cofactor.

The catalysed reaction is dTTP + alpha-D-glucose 1-phosphate + H(+) = dTDP-alpha-D-glucose + diphosphate. Catalyzes the formation of dTDP-glucose, from dTTP and glucose 1-phosphate, as well as its pyrophosphorolysis. Functionally, probably involved in the biosynthesis of the acarviose moiety of the alpha-glucosidase inhibitor acarbose. The polypeptide is Glucose-1-phosphate thymidylyltransferase (acbA) (Actinoplanes sp. (strain ATCC 31044 / CBS 674.73 / SE50/110)).